Reading from the N-terminus, the 374-residue chain is Flagellar P-ring protein (374 aa).

The first 29 residues, 1–29, serve as a signal peptide directing secretion; sequence MRRVRTTRLFQVACAAIVALASSAMSAHA.

Belongs to the FlgI family. In terms of assembly, the basal body constitutes a major portion of the flagellar organelle and consists of four rings (L,P,S, and M) mounted on a central rod.

Its subcellular location is the periplasm. It is found in the bacterial flagellum basal body. Its function is as follows. Assembles around the rod to form the L-ring and probably protects the motor/basal body from shearing forces during rotation. This chain is Flagellar P-ring protein, found in Bradyrhizobium sp. (strain BTAi1 / ATCC BAA-1182).